The primary structure comprises 449 residues: Probable mitochondrial chaperone bcs1 (449 aa).

Residues 1–20 are Mitochondrial intermembrane-facing; that stretch reads MDNIGAADAATSSGISGLLS. A helical membrane pass occupies residues 21–41; sequence GNSFLGAGIGLMGFGAGLAIL. At 42 to 449 the chain is on the mitochondrial matrix side; the sequence is RRGLISGASL…FNVHRKSLSV (408 aa). Residue 249–256 coordinates ATP; it reads GPPGSGKT.

Belongs to the AAA ATPase family. BCS1 subfamily.

It localises to the mitochondrion inner membrane. It catalyses the reaction ATP + H2O = ADP + phosphate + H(+). In terms of biological role, chaperone necessary for the incorporation of Rieske iron-sulfur protein rip1 into the mitochondrial respiratory chain complex III. This Schizosaccharomyces pombe (strain 972 / ATCC 24843) (Fission yeast) protein is Probable mitochondrial chaperone bcs1.